The primary structure comprises 412 residues: Phosphoglycerate kinase (412 aa).

Substrate-binding positions include 26-28 (DFN), arginine 42, 65-68 (HLGR), arginine 133, and arginine 166. Residues lysine 217, glycine 308, glutamate 339, and 368–371 (GGDS) contribute to the ATP site.

This sequence belongs to the phosphoglycerate kinase family. In terms of assembly, monomer.

It is found in the cytoplasm. It carries out the reaction (2R)-3-phosphoglycerate + ATP = (2R)-3-phospho-glyceroyl phosphate + ADP. Its pathway is carbohydrate degradation; glycolysis; pyruvate from D-glyceraldehyde 3-phosphate: step 2/5. This is Phosphoglycerate kinase from Synechococcus sp. (strain JA-2-3B'a(2-13)) (Cyanobacteria bacterium Yellowstone B-Prime).